The sequence spans 386 residues: Heat-inducible transcription repressor HrcA (386 aa).

Belongs to the HrcA family.

Functionally, negative regulator of class I heat shock genes (grpE-dnaK-dnaJ and groELS operons). Prevents heat-shock induction of these operons. The polypeptide is Heat-inducible transcription repressor HrcA (Chlamydia caviae (strain ATCC VR-813 / DSM 19441 / 03DC25 / GPIC) (Chlamydophila caviae)).